Consider the following 422-residue polypeptide: Serine--tRNA ligase (422 aa).

229 to 231 (TAE) serves as a coordination point for L-serine. 260-262 (RKE) contributes to the ATP binding site. Position 283 (glutamate 283) interacts with L-serine. Residue 347–350 (EISS) participates in ATP binding. Serine 383 serves as a coordination point for L-serine.

It belongs to the class-II aminoacyl-tRNA synthetase family. Type-1 seryl-tRNA synthetase subfamily. Homodimer. The tRNA molecule binds across the dimer.

Its subcellular location is the cytoplasm. It catalyses the reaction tRNA(Ser) + L-serine + ATP = L-seryl-tRNA(Ser) + AMP + diphosphate + H(+). It carries out the reaction tRNA(Sec) + L-serine + ATP = L-seryl-tRNA(Sec) + AMP + diphosphate + H(+). The protein operates within aminoacyl-tRNA biosynthesis; selenocysteinyl-tRNA(Sec) biosynthesis; L-seryl-tRNA(Sec) from L-serine and tRNA(Sec): step 1/1. Its function is as follows. Catalyzes the attachment of serine to tRNA(Ser). Is also able to aminoacylate tRNA(Sec) with serine, to form the misacylated tRNA L-seryl-tRNA(Sec), which will be further converted into selenocysteinyl-tRNA(Sec). The sequence is that of Serine--tRNA ligase from Citrifermentans bemidjiense (strain ATCC BAA-1014 / DSM 16622 / JCM 12645 / Bem) (Geobacter bemidjiensis).